We begin with the raw amino-acid sequence, 355 residues long: MTSLLFLVLISVCWAEPHPDNSSLEHERIIHIQEENGPRLLVVAEQAKIFSQRGGNVTLPCKFYHEHTSTAGSGTHKIRVKWTKLTSDYLKEVDVFVAMGHHRKSYGKYQGRVFLRESSENDASLIITNIMLEDYGRYKCEVIEGLEDDTAVVALNLEGVVFPYSPRLGRYNLNFHEAQQACLDQDSIIASFDQLYEAWRSGLDWCNAGWLSDGSVQYPITKPREPCGGKNTVPGVRNYGFWDKERSRYDVFCFTSNFNGRFYYLIHPTKLTYDEAVQACLKDGAQIAKVGQIFAAWKLLGYDRCDAGWLADGSVRYPISRPRKRCSPNEAAVRFVGFPDKKHKLYGVYCFRAYN.

Positions 1–9 are excised as a propeptide; the sequence is MTSLLFLVL. Asparagine 21 and asparagine 56 each carry an N-linked (GlcNAc...) asparagine glycan. Residues 38–156 form the Ig-like V-type domain; it reads PRLLVVAEQA…EDDTAVVALN (119 aa). Cystine bridges form between cysteine 61/cysteine 140, cysteine 182/cysteine 253, cysteine 206/cysteine 227, cysteine 280/cysteine 350, and cysteine 305/cysteine 326. 2 Link domains span residues 160–255 and 260–352; these read VVFP…FCFT and GRFY…YCFR.

The protein belongs to the HAPLN family.

Its subcellular location is the secreted. The protein localises to the extracellular space. It is found in the extracellular matrix. In terms of biological role, stabilizes the aggregates of proteoglycan monomers with hyaluronic acid in the extracellular cartilage matrix. The protein is Hyaluronan and proteoglycan link protein 1 (HAPLN1) of Gallus gallus (Chicken).